The following is a 153-amino-acid chain: UPF0260 protein Plav_0898 (153 aa).

The protein belongs to the UPF0260 family.

The polypeptide is UPF0260 protein Plav_0898 (Parvibaculum lavamentivorans (strain DS-1 / DSM 13023 / NCIMB 13966)).